We begin with the raw amino-acid sequence, 339 residues long: Ketol-acid reductoisomerase (NADP(+)) (339 aa).

One can recognise a KARI N-terminal Rossmann domain in the interval 1-182 (MRVYYDRDAD…GGGRAGVIET (182 aa)). NADP(+) contacts are provided by residues 24–27 (YGSQ), Arg48, Ser51, Thr53, and 83–86 (DELQ). Residue His108 is part of the active site. Gly134 serves as a coordination point for NADP(+). The region spanning 183-328 (TFKEECETDL…EKLRAMMPWI (146 aa)) is the KARI C-terminal knotted domain. Positions 191, 195, 227, and 231 each coordinate Mg(2+). Ser252 contributes to the substrate binding site.

Belongs to the ketol-acid reductoisomerase family. It depends on Mg(2+) as a cofactor.

The catalysed reaction is (2R)-2,3-dihydroxy-3-methylbutanoate + NADP(+) = (2S)-2-acetolactate + NADPH + H(+). The enzyme catalyses (2R,3R)-2,3-dihydroxy-3-methylpentanoate + NADP(+) = (S)-2-ethyl-2-hydroxy-3-oxobutanoate + NADPH + H(+). The protein operates within amino-acid biosynthesis; L-isoleucine biosynthesis; L-isoleucine from 2-oxobutanoate: step 2/4. It participates in amino-acid biosynthesis; L-valine biosynthesis; L-valine from pyruvate: step 2/4. Involved in the biosynthesis of branched-chain amino acids (BCAA). Catalyzes an alkyl-migration followed by a ketol-acid reduction of (S)-2-acetolactate (S2AL) to yield (R)-2,3-dihydroxy-isovalerate. In the isomerase reaction, S2AL is rearranged via a Mg-dependent methyl migration to produce 3-hydroxy-3-methyl-2-ketobutyrate (HMKB). In the reductase reaction, this 2-ketoacid undergoes a metal-dependent reduction by NADPH to yield (R)-2,3-dihydroxy-isovalerate. This is Ketol-acid reductoisomerase (NADP(+)) from Xanthobacter autotrophicus (strain ATCC BAA-1158 / Py2).